Consider the following 199-residue polypeptide: Elongation factor Ts (199 aa).

Residues 82 to 85 form an involved in Mg(2+) ion dislocation from EF-Tu region; the sequence is TDFV.

The protein belongs to the EF-Ts family.

It is found in the cytoplasm. Functionally, associates with the EF-Tu.GDP complex and induces the exchange of GDP to GTP. It remains bound to the aminoacyl-tRNA.EF-Tu.GTP complex up to the GTP hydrolysis stage on the ribosome. In Leptospira borgpetersenii serovar Hardjo-bovis (strain JB197), this protein is Elongation factor Ts.